A 974-amino-acid chain; its full sequence is MPRDREYDQWGYSGTRRDGGGRYGYRDRSRDERDRFRDVRDRDRDRDRDRERDRGGYRQDPRDRRYSRSRERERRGSGSRDRSRDRSRDRSRDAHRPPPSGRPHQPSGHDSTKSSNSMSETSSTSQVTGTTPNTTNATPSQAEIDAKKAAKLAKVAEWKRKKELERSKSASASPAPSTAPASPKAGFSMSGLSGLRKATDQGQVKRKMFFGGDSDEEDAGRKPAKLLKKLGEKEGSGKSEGKGRGGSQSEAKNASEKNGAASEPAEVDPLDAYMSSLTLPTTTSVSIADSTPLENLNVWEQVDTLEKSQDPTLDLSALSKRKEIAIVDHSKQVYEDFRRQFYVESSELADMTEAETNELRLSLDGIKIRGKDCPKPISKWTQLGLPGPTMGVLNDLRYDKPTSIQAQAIPAVMSGRDVISVAKTGSGKTLAFLLPMLRHIKHRVGVETHTTTLSGASSHPLGVIITPTRELCVQIYRDLRPFLAALELTAVCAYGGSPIKDQIAALKKGTHIIVCTPGRMIDLLAANQGRVLSLSRVTFLVIDEADRMFDMGFEPQVLKLTQSIRPDRQTVLFSATFPKKMEQLARRVLSKRSSDSLGPIEIIVGARSVVASEITQFVEVFQNEKSKFPRLLEVLGKYFAQGFFDEQSEGRVGTGESAATPIPNPKCLIFVERQESADSLLKELIQSGYPCLSIHGGKEQADRDQAISDFKSGLVSVLIATSVAARGLDVKGLGLVVNWDSPNHMEDYVHRVGRTGRAGQKGTALTFLLSDQERLAAEISRAIKSSGNAPPAPVQLMTERFEFKVRSGTEKRHMYGFSGKGLERLQDERDATREHERRAYEGDEAGEAETESSTPAASTANTDIIPKPVIVVTPPDSKSPTTAYHTTLQINDFPQQARYRASSNTSVSRVIANTGCSITAKGEYYPPGRIPGPKDEPKLFILIEGTSERAVKLAHHELSELLVSGLVKGARYQV.

Positions 1 to 267 are disordered; the sequence is MPRDREYDQW…NGAASEPAEV (267 aa). Over residues 15 to 96 the composition is skewed to basic and acidic residues; sequence TRRDGGGRYG…SRDRSRDAHR (82 aa). Residues 113–142 are compositionally biased toward low complexity; the sequence is KSSNSMSETSSTSQVTGTTPNTTNATPSQA. Residues 144-168 show a composition bias toward basic and acidic residues; it reads IDAKKAAKLAKVAEWKRKKELERSK. Low complexity predominate over residues 169–185; the sequence is SASASPAPSTAPASPKA. Basic and acidic residues predominate over residues 229-243; the sequence is KLGEKEGSGKSEGKG. A Q motif motif is present at residues 378-406; the sequence is SKWTQLGLPGPTMGVLNDLRYDKPTSIQA. The Helicase ATP-binding domain maps to 409 to 595; the sequence is IPAVMSGRDV…RRVLSKRSSD (187 aa). 422–429 serves as a coordination point for ATP; it reads AKTGSGKT. The short motif at 543–546 is the DEAD box element; it reads DEAD. In terms of domain architecture, Helicase C-terminal spans 654–800; it reads TGESAATPIP…PAPVQLMTER (147 aa). A disordered region spans residues 815–867; that stretch reads YGFSGKGLERLQDERDATREHERRAYEGDEAGEAETESSTPAASTANTDIIPK. Residues 821-841 show a composition bias toward basic and acidic residues; sequence GLERLQDERDATREHERRAYE. Residues 851 to 862 are compositionally biased toward polar residues; it reads ESSTPAASTANT.

It belongs to the DEAD box helicase family. DDX46/PRP5 subfamily.

The protein resides in the nucleus. It catalyses the reaction ATP + H2O = ADP + phosphate + H(+). ATP-dependent RNA helicase involved spliceosome assembly and in nuclear splicing. Catalyzes an ATP-dependent conformational change of U2 snRNP. Bridges U1 and U2 snRNPs and enables stable U2 snRNP association with intron RNA. In Yarrowia lipolytica (strain CLIB 122 / E 150) (Yeast), this protein is Pre-mRNA-processing ATP-dependent RNA helicase PRP5 (PRP5).